We begin with the raw amino-acid sequence, 412 residues long: tRNA (guanine-N(7)-)-methyltransferase non-catalytic subunit WDR4 (412 aa).

An N-acetylalanine modification is found at A2. WD repeat units lie at residues 3-40 (GSVG…IYDC), 50-90 (NKGE…LFRT), 94-131 (QCLS…SFSV), 137-174 (CGRL…VSWA), 180-218 (IESF…LWEY), 230-273 (ASLQ…IFQL), and 319-373 (PVGD…SYLK). The tract at residues 377 to 412 (ERLQQQLEKKQRRRSPPPGPDGHAKKMRPGEATLSC) is disordered. S391 and S411 each carry phosphoserine.

It belongs to the WD repeat TRM82 family. Non-catalytic component of the METTL1-WDR4 complex, composed of METTL1 and WDR4. Interacts with FEN1; the interaction is direct.

It is found in the nucleus. The protein localises to the chromosome. Its pathway is tRNA modification; N(7)-methylguanine-tRNA biosynthesis. Its function is as follows. Non-catalytic component of the METTL1-WDR4 methyltransferase complex required for the formation of N(7)-methylguanine in a subset of RNA species, such as tRNAs, mRNAs and microRNAs (miRNAs). In the METTL1-WDR4 methyltransferase complex, WDR4 acts as a scaffold for tRNA-binding. Required for the formation of N(7)-methylguanine at position 46 (m7G46) in a large subset of tRNAs that contain the 5'-RAGGU-3' motif within the variable loop. M7G46 interacts with C13-G22 in the D-loop to stabilize tRNA tertiary structure and protect tRNAs from decay. Also required for the formation of N(7)-methylguanine at internal sites in a subset of mRNAs. Also required for methylation of a specific subset of miRNAs, such as let-7. Independently of METTL1, also plays a role in genome stability: localizes at the DNA replication site and regulates endonucleolytic activities of FEN1. In Homo sapiens (Human), this protein is tRNA (guanine-N(7)-)-methyltransferase non-catalytic subunit WDR4.